The sequence spans 154 residues: Endoribonuclease YbeY (154 aa).

H118, H122, and H128 together coordinate Zn(2+).

The protein belongs to the endoribonuclease YbeY family. The cofactor is Zn(2+).

It localises to the cytoplasm. Functionally, single strand-specific metallo-endoribonuclease involved in late-stage 70S ribosome quality control and in maturation of the 3' terminus of the 16S rRNA. This chain is Endoribonuclease YbeY, found in Chloroflexus aurantiacus (strain ATCC 29366 / DSM 635 / J-10-fl).